Here is a 249-residue protein sequence, read N- to C-terminus: 3-deoxy-D-manno-octulosonic acid kinase (249 aa).

The active site involves D175.

Belongs to the protein kinase superfamily. KdkA/RfaP family.

It is found in the cell inner membrane. It catalyses the reaction an alpha-Kdo-(2-&gt;6)-lipid IVA + ATP = a 4-O-phospho-alpha-Kdo-(2-&gt;6)-lipid IVA + ADP + H(+). It participates in bacterial outer membrane biogenesis; LPS core biosynthesis. Functionally, catalyzes the ATP-dependent phosphorylation of the 3-deoxy-D-manno-octulosonic acid (Kdo) residue in Kdo-lipid IV(A) at the 4-OH position. The protein is 3-deoxy-D-manno-octulosonic acid kinase of Stenotrophomonas maltophilia (strain R551-3).